A 104-amino-acid polypeptide reads, in one-letter code: Large ribosomal subunit protein uL24 (104 aa).

The interval 41 to 61 (ISKKHKKPTPNEKQSGGIFEK) is disordered.

Belongs to the universal ribosomal protein uL24 family. Part of the 50S ribosomal subunit.

One of two assembly initiator proteins, it binds directly to the 5'-end of the 23S rRNA, where it nucleates assembly of the 50S subunit. In terms of biological role, one of the proteins that surrounds the polypeptide exit tunnel on the outside of the subunit. The polypeptide is Large ribosomal subunit protein uL24 (Wigglesworthia glossinidia brevipalpis).